A 278-amino-acid chain; its full sequence is Elongation factor Ts (278 aa).

An involved in Mg(2+) ion dislocation from EF-Tu region spans residues 82–85 (TDFV).

Belongs to the EF-Ts family.

The protein localises to the cytoplasm. Functionally, associates with the EF-Tu.GDP complex and induces the exchange of GDP to GTP. It remains bound to the aminoacyl-tRNA.EF-Tu.GTP complex up to the GTP hydrolysis stage on the ribosome. This Streptomyces griseus subsp. griseus (strain JCM 4626 / CBS 651.72 / NBRC 13350 / KCC S-0626 / ISP 5235) protein is Elongation factor Ts.